The primary structure comprises 225 residues: PKHD-type hydroxylase YbiX (225 aa).

A Fe2OG dioxygenase domain is found at 78-177 (TLSTPLFNRY…RVASFMWIQS (100 aa)). The Fe cation site is built by His-96, Asp-98, and His-158. A 2-oxoglutarate-binding site is contributed by Arg-168.

Fe(2+) is required as a cofactor. L-ascorbate serves as cofactor.

This is PKHD-type hydroxylase YbiX from Escherichia coli O45:K1 (strain S88 / ExPEC).